Here is a 516-residue protein sequence, read N- to C-terminus: MSDDRKQIKRALISVYDKTGLEELARTLDSAGVEIVSTGSTAAKIADLGINVTPVESLTGFPECLEGRVKTLHPRVHAGILADTRKPDHLNQLEELEIEPFQLVVVNLYPFKETVASGADFDGCVEQIDIGGPSMVRAAAKNHPSVAVVVDPARYGDIAEAVAQGGFDLAQRRQLAATAFKHTADYDVAVSGWFAQQLADDSVASAELEGDALRYGENPHQQASIVREGTTGVANAKQLHGKEMSYNNYQDADAAWRAAWDHERPCVAIIKHANPCGIAVSDESIAAAHAAAHACDPMSAFGGVIAVNREVTKEMATQVADIFTEVIIAPSYEDGAVEILQGKKNIRILVAEHEVPAVEVKEISGGRLLQEADVYQAEGDKASSWTLAAGEAASEEKLAELEFAWRAVRSVKSNAILLAHEGATVGVGMGQVNRVDSAKLAVDRANTLADSAERARGSVAASDAFFPFADGLQVLIDAGVSAVVQPGGSIRDEEVIAAAEAAGITMYFTGTRHFAH.

The region spanning 1-150 is the MGS-like domain; that stretch reads MSDDRKQIKR…KNHPSVAVVV (150 aa).

The protein belongs to the PurH family.

The enzyme catalyses (6R)-10-formyltetrahydrofolate + 5-amino-1-(5-phospho-beta-D-ribosyl)imidazole-4-carboxamide = 5-formamido-1-(5-phospho-D-ribosyl)imidazole-4-carboxamide + (6S)-5,6,7,8-tetrahydrofolate. The catalysed reaction is IMP + H2O = 5-formamido-1-(5-phospho-D-ribosyl)imidazole-4-carboxamide. The protein operates within purine metabolism; IMP biosynthesis via de novo pathway; 5-formamido-1-(5-phospho-D-ribosyl)imidazole-4-carboxamide from 5-amino-1-(5-phospho-D-ribosyl)imidazole-4-carboxamide (10-formyl THF route): step 1/1. Its pathway is purine metabolism; IMP biosynthesis via de novo pathway; IMP from 5-formamido-1-(5-phospho-D-ribosyl)imidazole-4-carboxamide: step 1/1. This is Bifunctional purine biosynthesis protein PurH from Corynebacterium ammoniagenes (Brevibacterium ammoniagenes).